Here is a 360-residue protein sequence, read N- to C-terminus: MARYELIKDEIGSIAKYVPGRSIEDIVKNYGLEPSSVIKLGSNENPLGPSPKAVEALIANAQGISIYPSADARELVDAISEYTDIPAANIVASGPGMDGLLDGLARLVIANGDEVVITTPTFSYYEIAARANGATTVYVQREKDFSINVDKLLAALTPNTKMIFLCSPNNPTGNVIPEEDILKIATATDALVFVDEAYVEFAEKNIAHLVLQHDNIIVGRTFSKAFGLAGMRMGYGIMPEWLREEYMKIATPFNVSTAAMAAGIAALSDTEHLNKSIELTVKGKKFLQEELPFKVYDTQANFVLVDVAPHKARDVTTELLKKGIIVRDCTSFAHAGLSLIRVTIGTKEQNEKVVKAFSDI.

At lysine 224 the chain carries N6-(pyridoxal phosphate)lysine.

This sequence belongs to the class-II pyridoxal-phosphate-dependent aminotransferase family. Histidinol-phosphate aminotransferase subfamily. Pyridoxal 5'-phosphate serves as cofactor.

The catalysed reaction is L-histidinol phosphate + 2-oxoglutarate = 3-(imidazol-4-yl)-2-oxopropyl phosphate + L-glutamate. Its pathway is amino-acid biosynthesis; L-histidine biosynthesis; L-histidine from 5-phospho-alpha-D-ribose 1-diphosphate: step 7/9. This is Histidinol-phosphate aminotransferase from Methanococcoides burtonii (strain DSM 6242 / NBRC 107633 / OCM 468 / ACE-M).